Reading from the N-terminus, the 356-residue chain is Uroporphyrinogen decarboxylase (356 aa).

Substrate-binding positions include 27 to 31, aspartate 77, tyrosine 154, threonine 209, and histidine 327; that span reads RQAGR.

The protein belongs to the uroporphyrinogen decarboxylase family. In terms of assembly, homodimer.

Its subcellular location is the cytoplasm. The catalysed reaction is uroporphyrinogen III + 4 H(+) = coproporphyrinogen III + 4 CO2. It functions in the pathway porphyrin-containing compound metabolism; protoporphyrin-IX biosynthesis; coproporphyrinogen-III from 5-aminolevulinate: step 4/4. Its function is as follows. Catalyzes the decarboxylation of four acetate groups of uroporphyrinogen-III to yield coproporphyrinogen-III. This chain is Uroporphyrinogen decarboxylase, found in Hamiltonella defensa subsp. Acyrthosiphon pisum (strain 5AT).